The sequence spans 69 residues: DNA-directed RNA polymerase subunit omega (69 aa).

This sequence belongs to the RNA polymerase subunit omega family. As to quaternary structure, the RNAP catalytic core consists of 2 alpha, 1 beta, 1 beta' and 1 omega subunit. When a sigma factor is associated with the core the holoenzyme is formed, which can initiate transcription.

It catalyses the reaction RNA(n) + a ribonucleoside 5'-triphosphate = RNA(n+1) + diphosphate. Promotes RNA polymerase assembly. Latches the N- and C-terminal regions of the beta' subunit thereby facilitating its interaction with the beta and alpha subunits. The protein is DNA-directed RNA polymerase subunit omega of Geotalea uraniireducens (strain Rf4) (Geobacter uraniireducens).